A 253-amino-acid chain; its full sequence is uncharacterized protein (253 aa).

C2HC LYAR-type zinc fingers lie at residues 1–26 (MVFFSCNNCGEACKKNQVERHLFQCR) and 27–51 (NTTFSCIDCQLVYTRETYKDHVKCI). Cys-6, Cys-9, His-21, Cys-25, Cys-32, Cys-35, His-47, and Cys-50 together coordinate Zn(2+). Residues 136–171 (AAEADKMREEAIRKQEETQKMEKAQKEAAAAAKKET) adopt a coiled-coil conformation.

Its subcellular location is the nucleus. This is an uncharacterized protein from Caenorhabditis elegans.